We begin with the raw amino-acid sequence, 207 residues long: Varv peptide A/Kalata-B1 (207 aa).

The signal sequence occupies residues 1–20; sequence MKMFIVLVLSAAFALPAAFA. Residues 21 to 66 constitute a propeptide that is removed on maturation; the sequence is TEQDVITLQAYEELLKNGAANGMTKTVISSPVLEEALVSYSKNKLG. Positions 67 to 95 form a cross-link, cyclopeptide (Gly-Asn); it reads GLPVCGETCVGGTCNTPGCSCSWPVCTRN. 3 cysteine pairs are disulfide-bonded: C71–C85, C75–C87, and C80–C92. Residues 96–120 constitute a propeptide that is removed on maturation; it reads SLESTKSANPLLEEALTAFAKKGLG. Positions 121–149 form a cross-link, cyclopeptide (Gly-Asn); the sequence is GLPVCGETCVGGTCNTPGCTCSWPVCTRN. Intrachain disulfides connect C125-C139, C129-C141, and C134-C146. Residues 150-174 constitute a propeptide that is removed on maturation; sequence ALETQKPNHLLEEALVAFAKKGNLG. The cyclopeptide (Gly-Asn) cross-link spans 175-203; sequence GLPVCGETCVGGTCNTPGCSCSWPVCTRN. 3 disulfides stabilise this stretch: C179–C193, C183–C195, and C188–C200. Residues 204 to 207 constitute a propeptide that is removed on maturation; that stretch reads ALAM.

This sequence belongs to the cyclotide family. Moebius subfamily. Varv peptide A and kalata-B1 are cyclic peptides.

Its function is as follows. Probably participates in a plant defense mechanism. Has hemolytic activity. The sequence is that of Varv peptide A/Kalata-B1 from Viola odorata (Sweet violet).